Consider the following 108-residue polypeptide: Nucleoid-associated protein Lcho_1975 (108 aa).

The protein belongs to the YbaB/EbfC family. In terms of assembly, homodimer.

It is found in the cytoplasm. The protein resides in the nucleoid. Functionally, binds to DNA and alters its conformation. May be involved in regulation of gene expression, nucleoid organization and DNA protection. The sequence is that of Nucleoid-associated protein Lcho_1975 from Leptothrix cholodnii (strain ATCC 51168 / LMG 8142 / SP-6) (Leptothrix discophora (strain SP-6)).